We begin with the raw amino-acid sequence, 102 residues long: Protamine-2 (102 aa).

A disordered region spans residues 1 to 102 (MVRYRMRSLS…RTRRRRCRRH (102 aa)). Phosphoserine is present on residues S8 and S10. Residues 8–17 (SLSERSHEVH) show a composition bias toward basic and acidic residues. The span at 18–29 (GQQVHGQDQGHN) shows a compositional bias: low complexity. A compositionally biased stretch (basic and acidic residues) spans 39–48 (EHVEVYERTH). Basic residues predominate over residues 49–102 (GHSHYRRRHCSRRRLHRIHRRRHRSCRRRRRRSCRHRRRHRRGCRTRRRRCRRH).

It belongs to the protamine P2 family. As to quaternary structure, interacts with TDRP. In terms of processing, proteolytic processing into mature chains is required for histone eviction during spermatogenesis. Transition proteins (TNP1 and TNP2) are required for processing. Testis.

Its subcellular location is the nucleus. It is found in the chromosome. Its function is as follows. Protamines substitute for histones in the chromatin of sperm during the haploid phase of spermatogenesis. They compact sperm DNA into a highly condensed, stable and inactive complex. This chain is Protamine-2 (PRM2), found in Macaca mulatta (Rhesus macaque).